Reading from the N-terminus, the 99-residue chain is NADH-quinone oxidoreductase subunit K 1 (99 aa).

3 consecutive transmembrane segments (helical) span residues 3–23 (PVNY…GVLV), 28–48 (IVVF…LVTF), and 59–79 (IVAF…LAII).

It belongs to the complex I subunit 4L family. In terms of assembly, NDH-1 is composed of 14 different subunits. Subunits NuoA, H, J, K, L, M, N constitute the membrane sector of the complex.

The protein resides in the cell membrane. It catalyses the reaction a quinone + NADH + 5 H(+)(in) = a quinol + NAD(+) + 4 H(+)(out). Functionally, NDH-1 shuttles electrons from NADH, via FMN and iron-sulfur (Fe-S) centers, to quinones in the respiratory chain. The immediate electron acceptor for the enzyme in this species is believed to be a menaquinone. Couples the redox reaction to proton translocation (for every two electrons transferred, four hydrogen ions are translocated across the cytoplasmic membrane), and thus conserves the redox energy in a proton gradient. In Streptomyces griseus subsp. griseus (strain JCM 4626 / CBS 651.72 / NBRC 13350 / KCC S-0626 / ISP 5235), this protein is NADH-quinone oxidoreductase subunit K 1.